A 436-amino-acid chain; its full sequence is Glutamyl-tRNA reductase (436 aa).

Residues 50–53 (TCNR), Ser-110, 115–117 (ETQ), and Gln-121 each bind substrate. The Nucleophile role is filled by Cys-51. Residue 190–195 (GLGEMS) coordinates NADP(+).

It belongs to the glutamyl-tRNA reductase family. In terms of assembly, homodimer.

The enzyme catalyses (S)-4-amino-5-oxopentanoate + tRNA(Glu) + NADP(+) = L-glutamyl-tRNA(Glu) + NADPH + H(+). The protein operates within porphyrin-containing compound metabolism; protoporphyrin-IX biosynthesis; 5-aminolevulinate from L-glutamyl-tRNA(Glu): step 1/2. Functionally, catalyzes the NADPH-dependent reduction of glutamyl-tRNA(Glu) to glutamate 1-semialdehyde (GSA). The polypeptide is Glutamyl-tRNA reductase (Wolinella succinogenes (strain ATCC 29543 / DSM 1740 / CCUG 13145 / JCM 31913 / LMG 7466 / NCTC 11488 / FDC 602W) (Vibrio succinogenes)).